The sequence spans 202 residues: Small ribosomal subunit protein uS4c (202 aa).

The interval G20 to S43 is disordered. Positions M90–Y152 constitute an S4 RNA-binding domain.

It belongs to the universal ribosomal protein uS4 family. Part of the 30S ribosomal subunit. Contacts protein S5. The interaction surface between S4 and S5 is involved in control of translational fidelity.

The protein localises to the plastid. It localises to the chloroplast. In terms of biological role, one of the primary rRNA binding proteins, it binds directly to 16S rRNA where it nucleates assembly of the body of the 30S subunit. Its function is as follows. With S5 and S12 plays an important role in translational accuracy. The sequence is that of Small ribosomal subunit protein uS4c (rps4) from Rhodomonas salina (Cryptomonas salina).